The primary structure comprises 348 residues: Phenylalanine--tRNA ligase alpha subunit (348 aa).

Glu259 serves as a coordination point for Mg(2+).

The protein belongs to the class-II aminoacyl-tRNA synthetase family. Phe-tRNA synthetase alpha subunit type 1 subfamily. Tetramer of two alpha and two beta subunits. Requires Mg(2+) as cofactor.

It localises to the cytoplasm. It catalyses the reaction tRNA(Phe) + L-phenylalanine + ATP = L-phenylalanyl-tRNA(Phe) + AMP + diphosphate + H(+). The polypeptide is Phenylalanine--tRNA ligase alpha subunit (Enterococcus faecalis (strain ATCC 700802 / V583)).